The primary structure comprises 716 residues: Dynein axonemal intermediate chain 7 (716 aa).

The protein belongs to the DNAI7 family. Part of the multisubunit axonemal dynein complex formed at least of two heavy chains and a number of intermediate and light chains. Interacts with tubulin. Associates with microtubule. Post-translationally, ubiquitinated. Ubiquitination leads to its degradation through the 26S proteasome. Ubiquitin-proteasome-mediated DNAI7 degradation occurs in mitosis.

The protein resides in the cell projection. The protein localises to the cilium. It localises to the cytoplasm. Functionally, via its association with the multisubunit axonemal dynein complex, is potentially involved in the regulation of cilia function. May also act as a cell cycle regulator. The protein is Dynein axonemal intermediate chain 7 of Homo sapiens (Human).